Consider the following 139-residue polypeptide: Gonadotropin subunit beta-2 (139 aa).

A signal peptide spans 1-24 (MFPLVLSLFLGATSDIWPLAPAEA). 6 disulfides stabilise this stretch: Cys30-Cys78, Cys44-Cys93, Cys47-Cys131, Cys55-Cys109, Cys59-Cys111, and Cys114-Cys121. N-linked (GlcNAc...) asparagine glycosylation occurs at Asn34.

Belongs to the glycoprotein hormones subunit beta family. In terms of assembly, heterodimer of an alpha and a beta chain.

Its subcellular location is the secreted. Its function is as follows. Involved in gametogenesis and steroidogenesis. The sequence is that of Gonadotropin subunit beta-2 (cgbb) from Morone saxatilis (Striped bass).